The primary structure comprises 638 residues: Threonine--tRNA ligase (638 aa).

The TGS domain occupies 1-59 (MEKIKVKIKGKEYEVEKGTPLGKIFELAGIKDALGGVINGKIIDLQTPVRESGEIKPVY). The tract at residues 243–536 (DHRRLGKELE…LLEHYAGLLP (294 aa)) is catalytic. Zn(2+) is bound by residues cysteine 336, histidine 387, and histidine 513.

It belongs to the class-II aminoacyl-tRNA synthetase family. In terms of assembly, homodimer. Zn(2+) serves as cofactor.

The protein resides in the cytoplasm. It catalyses the reaction tRNA(Thr) + L-threonine + ATP = L-threonyl-tRNA(Thr) + AMP + diphosphate + H(+). Functionally, catalyzes the attachment of threonine to tRNA(Thr) in a two-step reaction: L-threonine is first activated by ATP to form Thr-AMP and then transferred to the acceptor end of tRNA(Thr). Also edits incorrectly charged L-seryl-tRNA(Thr). The chain is Threonine--tRNA ligase from Aquifex aeolicus (strain VF5).